We begin with the raw amino-acid sequence, 457 residues long: Phosphoglucosamine mutase (457 aa).

Ser-109 acts as the Phosphoserine intermediate in catalysis. Mg(2+) is bound by residues Ser-109, Asp-251, Asp-253, and Asp-255. At Ser-109 the chain carries Phosphoserine.

Belongs to the phosphohexose mutase family. Mg(2+) serves as cofactor. Post-translationally, activated by phosphorylation.

It carries out the reaction alpha-D-glucosamine 1-phosphate = D-glucosamine 6-phosphate. In terms of biological role, catalyzes the conversion of glucosamine-6-phosphate to glucosamine-1-phosphate. The polypeptide is Phosphoglucosamine mutase (Bdellovibrio bacteriovorus (strain ATCC 15356 / DSM 50701 / NCIMB 9529 / HD100)).